The chain runs to 222 residues: Interleukin-12 subunit alpha (222 aa).

A signal peptide spans 1–25 (MCPPRGLLLVAILVLLNHLDHLSLA). 3 cysteine pairs are disulfide-bonded: cysteine 40–cysteine 113, cysteine 67–cysteine 199, and cysteine 88–cysteine 126. Asparagine 42, asparagine 96, and asparagine 110 each carry an N-linked (GlcNAc...) asparagine glycan.

The protein belongs to the IL-6 superfamily. In terms of assembly, heterodimer with IL12B; disulfide-linked. This heterodimer is known as interleukin IL-12. Heterodimer with EBI3/IL27B; not disulfide-linked. This heterodimer is known as interleukin IL-35. Interacts with NBR1; this interaction promotes IL-12 secretion.

It is found in the secreted. Its function is as follows. Heterodimerizes with IL12B to form the IL-12 cytokine or with EBI3/IL27B to form the IL-35 cytokine. IL-12 is primarily produced by professional antigen-presenting cells (APCs) such as B-cells and dendritic cells (DCs) as well as macrophages and granulocytes and regulates T-cell and natural killer-cell responses, induces the production of interferon-gamma (IFN-gamma), favors the differentiation of T-helper 1 (Th1) cells and is an important link between innate resistance and adaptive immunity. Mechanistically, exerts its biological effects through a receptor composed of IL12R1 and IL12R2 subunits. Binding to the receptor results in the rapid tyrosine phosphorylation of a number of cellular substrates including the JAK family kinases TYK2 and JAK2. In turn, recruited STAT4 gets phosphorylated and translocates to the nucleus where it regulates cytokine/growth factor responsive genes. As part of IL-35, plays essential roles in maintaining the immune homeostasis of the liver microenvironment and also functions as an immune-suppressive cytokine. Mediates biological events through unconventional receptors composed of IL12RB2 and gp130/IL6ST heterodimers or homodimers. Signaling requires the transcription factors STAT1 and STAT4, which form a unique heterodimer that binds to distinct DNA sites. This is Interleukin-12 subunit alpha (IL12A) from Equus caballus (Horse).